A 102-amino-acid chain; its full sequence is Small ribosomal subunit protein uS10 (102 aa).

Belongs to the universal ribosomal protein uS10 family. In terms of assembly, part of the 30S ribosomal subunit.

Its function is as follows. Involved in the binding of tRNA to the ribosomes. The polypeptide is Small ribosomal subunit protein uS10 (Gluconacetobacter diazotrophicus (strain ATCC 49037 / DSM 5601 / CCUG 37298 / CIP 103539 / LMG 7603 / PAl5)).